Consider the following 509-residue polypeptide: Dihydrolipoyl dehydrogenase, mitochondrial (509 aa).

The transit peptide at 1–35 (MQSWSRVYCSLAKRGHFSRISHGLQAVSAVPLRTY) directs the protein to the mitochondrion. Residue K66 is modified to N6-acetyllysine; alternate. N6-succinyllysine; alternate is present on K66. FAD contacts are provided by residues 71-80 (EKNETLGGTC) and K89. An intrachain disulfide couples C80 to C85. 4 positions are modified to N6-acetyllysine; alternate: K104, K122, K132, and K143. Residues K104, K122, K132, and K143 each carry the N6-succinyllysine; alternate modification. G154 lines the FAD pocket. K159 and K166 each carry N6-succinyllysine. Residue 183–185 (TGS) coordinates FAD. NAD(+) is bound by residues 220–227 (GAGVIGVE) and E243. N6-succinyllysine occurs at positions 273 and 277. An NAD(+)-binding site is contributed by V278. Phosphoserine occurs at positions 285 and 297. NAD(+) is bound at residue G314. The residue at position 346 (K346) is an N6-acetyllysine. Residues D355 and 361–364 (MLAH) each bind FAD. Position 410 is an N6-acetyllysine; alternate (K410). K410 is modified (N6-succinyllysine; alternate). Residues K417 and K420 each carry the N6-acetyllysine modification. An N6-succinyllysine modification is found at K430. The active-site Proton acceptor is the H487. S502 carries the post-translational modification Phosphoserine. At K505 the chain carries N6-acetyllysine; alternate. The residue at position 505 (K505) is an N6-succinyllysine; alternate.

The protein belongs to the class-I pyridine nucleotide-disulfide oxidoreductase family. As to quaternary structure, homodimer. Part of the multimeric pyruvate dehydrogenase complex that contains multiple copies of pyruvate dehydrogenase (subunits PDHA (PDHA1 or PDHA2) and PDHB, E1), dihydrolipoamide acetyltransferase (DLAT, E2) and lipoamide dehydrogenase (DLD, E3). These subunits are bound to an inner core composed of about 48 DLAT and 12 PDHX molecules (by non covalent bonds). The 2-oxoglutarate dehydrogenase complex is composed of OGDH (2-oxoglutarate dehydrogenase; E1), DLST (dihydrolipoamide succinyltransferase; E2), DLD (dihydrolipoamide dehydrogenase; E3) and the assembly factor KGD4. It contains multiple copies of the three enzymatic components (E1, E2 and E3). In the nucleus, the 2-oxoglutarate dehydrogenase complex associates with KAT2A. Interacts with PDHX. It depends on FAD as a cofactor. Tyrosine phosphorylated.

The protein localises to the mitochondrion matrix. It is found in the nucleus. The protein resides in the cell projection. It localises to the cilium. Its subcellular location is the flagellum. The protein localises to the cytoplasmic vesicle. It is found in the secretory vesicle. The protein resides in the acrosome. It catalyses the reaction N(6)-[(R)-dihydrolipoyl]-L-lysyl-[protein] + NAD(+) = N(6)-[(R)-lipoyl]-L-lysyl-[protein] + NADH + H(+). Functionally, lipoamide dehydrogenase is a component of the glycine cleavage system as well as an E3 component of three alpha-ketoacid dehydrogenase complexes (pyruvate-, alpha-ketoglutarate-, and branched-chain amino acid-dehydrogenase complex). The 2-oxoglutarate dehydrogenase complex is mainly active in the mitochondrion. A fraction of the 2-oxoglutarate dehydrogenase complex also localizes in the nucleus and is required for lysine succinylation of histones: associates with KAT2A on chromatin and provides succinyl-CoA to histone succinyltransferase KAT2A. In monomeric form may have additional moonlighting function as serine protease. Involved in the hyperactivation of spermatazoa during capacitation and in the spermatazoal acrosome reaction. This is Dihydrolipoyl dehydrogenase, mitochondrial (DLD) from Canis lupus familiaris (Dog).